Reading from the N-terminus, the 342-residue chain is 4-hydroxy-3-methylbut-2-enyl diphosphate reductase (342 aa).

Cysteine 47 is a [4Fe-4S] cluster binding site. Residues histidine 78 and histidine 111 each coordinate (2E)-4-hydroxy-3-methylbut-2-enyl diphosphate. Positions 78 and 111 each coordinate dimethylallyl diphosphate. Isopentenyl diphosphate contacts are provided by histidine 78 and histidine 111. Cysteine 133 contributes to the [4Fe-4S] cluster binding site. A (2E)-4-hydroxy-3-methylbut-2-enyl diphosphate-binding site is contributed by histidine 161. Histidine 161 lines the dimethylallyl diphosphate pocket. An isopentenyl diphosphate-binding site is contributed by histidine 161. Residue glutamate 163 is the Proton donor of the active site. Threonine 201 serves as a coordination point for (2E)-4-hydroxy-3-methylbut-2-enyl diphosphate. Residue cysteine 231 coordinates [4Fe-4S] cluster. (2E)-4-hydroxy-3-methylbut-2-enyl diphosphate contacts are provided by serine 259, serine 260, asparagine 261, and serine 303. 4 residues coordinate dimethylallyl diphosphate: serine 259, serine 260, asparagine 261, and serine 303. Residues serine 259, serine 260, asparagine 261, and serine 303 each coordinate isopentenyl diphosphate.

The protein belongs to the IspH family. [4Fe-4S] cluster is required as a cofactor.

It catalyses the reaction isopentenyl diphosphate + 2 oxidized [2Fe-2S]-[ferredoxin] + H2O = (2E)-4-hydroxy-3-methylbut-2-enyl diphosphate + 2 reduced [2Fe-2S]-[ferredoxin] + 2 H(+). The enzyme catalyses dimethylallyl diphosphate + 2 oxidized [2Fe-2S]-[ferredoxin] + H2O = (2E)-4-hydroxy-3-methylbut-2-enyl diphosphate + 2 reduced [2Fe-2S]-[ferredoxin] + 2 H(+). It participates in isoprenoid biosynthesis; dimethylallyl diphosphate biosynthesis; dimethylallyl diphosphate from (2E)-4-hydroxy-3-methylbutenyl diphosphate: step 1/1. The protein operates within isoprenoid biosynthesis; isopentenyl diphosphate biosynthesis via DXP pathway; isopentenyl diphosphate from 1-deoxy-D-xylulose 5-phosphate: step 6/6. Its function is as follows. Catalyzes the conversion of 1-hydroxy-2-methyl-2-(E)-butenyl 4-diphosphate (HMBPP) into a mixture of isopentenyl diphosphate (IPP) and dimethylallyl diphosphate (DMAPP). Acts in the terminal step of the DOXP/MEP pathway for isoprenoid precursor biosynthesis. The sequence is that of 4-hydroxy-3-methylbut-2-enyl diphosphate reductase from Anaplasma marginale (strain Florida).